We begin with the raw amino-acid sequence, 369 residues long: Protein FAM187B (369 aa).

The signal sequence occupies residues 1–17 (MPPMLWLLLNFAAPALG). The Extracellular segment spans residues 18–333 (FYFSISCPSG…PGRADSVLKG (316 aa)). Asn45, Asn68, and Asn130 each carry an N-linked (GlcNAc...) asparagine glycan. The helical transmembrane segment at 334 to 354 (LKLVLLVGTVLVLLGALLKFI) threads the bilayer. The Cytoplasmic segment spans residues 355-369 (RPSPGKRSKQVLMVK).

Belongs to the FAM187 family.

The protein localises to the membrane. This Macaca fascicularis (Crab-eating macaque) protein is Protein FAM187B (FAM187B).